The chain runs to 731 residues: Alpha-catulin (731 aa).

A phosphoserine mark is found at serine 373 and serine 537. Positions 535–559 (HLSLPKPTKNSANLKSLKPDKPDSE) are disordered.

It belongs to the vinculin/alpha-catenin family. As to quaternary structure, interacts with ARHGEF1. Interacts with Dtna. The interaction is required for correct localization of both Ctnnal1 and Dtna.

It localises to the cytoplasm. Its subcellular location is the cytoskeleton. It is found in the cell membrane. Its function is as follows. May modulate the Rho pathway signaling by providing a scaffold for the Lbc Rho guanine nucleotide exchange factor (ARHGEF1). This is Alpha-catulin (Ctnnal1) from Mus musculus (Mouse).